Consider the following 255-residue polypeptide: Probable transcriptional regulatory protein Rcas_0718 (255 aa).

This sequence belongs to the TACO1 family.

The protein localises to the cytoplasm. This is Probable transcriptional regulatory protein Rcas_0718 from Roseiflexus castenholzii (strain DSM 13941 / HLO8).